Consider the following 396-residue polypeptide: Subtelomeric hrmA-associated cluster protein AFUB_079040 (396 aa).

2 disordered regions span residues 1–32 and 347–396; these read MANK…QQSL and YPEN…ECGR. Residues 23–32 are compositionally biased toward polar residues; sequence SHASGSQQSL. Positions 367 to 380 are enriched in basic residues; it reads SKKKKDKKKKKSNK.

Functionally, part of the subtelomeric hrmA-associated cluster (HAC) containing genes that alter the hyphal surface (such as reduced total chitin or increased beta-glucan exposure) and perturb inter-hyphal interactions within the developing biofilms, resulting in a loss of vertically aligned polarized growing filaments. Consequently, this hypoxia-typic morphotype (called H-MORPH) with altered biofilm architecture leads to increased hypoxia fitness, increased host inflammation, rapid disease progression, and mortality in a murine model of invasive aspergillosis. The sequence is that of Subtelomeric hrmA-associated cluster protein AFUB_079040 from Aspergillus fumigatus (strain CBS 144.89 / FGSC A1163 / CEA10) (Neosartorya fumigata).